Reading from the N-terminus, the 635-residue chain is Arabinoxylan arabinofuranohydrolase (635 aa).

Residues 1–26 (MIRKCLVLFLSFALLLSVFPMLNVDA) form the signal peptide. Residue aspartate 49 is the Proton acceptor of the active site. The active-site Proton donor is glutamate 248. A substrate-binding site is contributed by asparagine 311. CBM6 domains are found at residues 379–508 (TRVE…WQFT) and 517–634 (TKVE…IEFS). Residues glutamate 382, glutamate 384, asparagine 406, leucine 407, aspartate 503, glutamate 520, glutamate 522, aspartate 539, tyrosine 544, aspartate 620, tryptophan 624, aspartate 625, and aspartate 629 each coordinate Ca(2+).

This sequence belongs to the glycosyl hydrolase 43 family.

The protein localises to the secreted. It catalyses the reaction Hydrolysis of terminal non-reducing alpha-L-arabinofuranoside residues in alpha-L-arabinosides.. Its pathway is glycan degradation; xylan degradation. Its activity is regulated as follows. Activated by calcium and magnesium. Inhibited by copper. In terms of biological role, cleaves arabinose units from O-2- or O-3-monosubstituted xylose residues, thereby assisting in arabinoxylan (AX) and short-chain arabinoxylo-oligosaccharide (AXOS) degradation. Preferres wheat flour xylan over oat spelt xylan as substrate. Does not display endoxylanase activity. The sequence is that of Arabinoxylan arabinofuranohydrolase (xynD) from Paenibacillus polymyxa (Bacillus polymyxa).